The sequence spans 363 residues: S-adenosylmethionine decarboxylase proenzyme (363 aa).

Residues Glu9 and Glu12 contribute to the active site. Ser69 functions as the Schiff-base intermediate with substrate; via pyruvic acid in the catalytic mechanism. Position 69 is a pyruvic acid (Ser); by autocatalysis (Ser69). The active-site Proton donor; for catalytic activity is the Cys83. Active-site proton acceptor; for processing activity residues include Ser232 and His245.

It belongs to the eukaryotic AdoMetDC family. The cofactor is pyruvate. Is synthesized initially as an inactive proenzyme. Formation of the active enzyme involves a self-maturation process in which the active site pyruvoyl group is generated from an internal serine residue via an autocatalytic post-translational modification. Two non-identical subunits are generated from the proenzyme in this reaction, and the pyruvate is formed at the N-terminus of the alpha chain, which is derived from the carboxyl end of the proenzyme. The post-translation cleavage follows an unusual pathway, termed non-hydrolytic serinolysis, in which the side chain hydroxyl group of the serine supplies its oxygen atom to form the C-terminus of the beta chain, while the remainder of the serine residue undergoes an oxidative deamination to produce ammonia and the pyruvoyl group blocking the N-terminus of the alpha chain.

It carries out the reaction S-adenosyl-L-methionine + H(+) = S-adenosyl 3-(methylsulfanyl)propylamine + CO2. Its pathway is amine and polyamine biosynthesis; S-adenosylmethioninamine biosynthesis; S-adenosylmethioninamine from S-adenosyl-L-methionine: step 1/1. The sequence is that of S-adenosylmethionine decarboxylase proenzyme (SAMDC) from Spinacia oleracea (Spinach).